The following is a 1749-amino-acid chain: Intraflagellar transport protein 172 homolog (1749 aa).

Met1 carries the N-acetylmethionine modification. Residue Lys4 forms a Glycyl lysine isopeptide (Lys-Gly) (interchain with G-Cter in SUMO1) linkage. WD repeat units follow at residues 14–53 (DGAAKVTCMAWSQNNAKFAVCTVDRVVLLYDEHGERRDKF), 64–103 (RKSYMVKGMAFSPDSTKIAIGQTDNIIYVYKIGEDWGDKK), 110–148 (IQTSAVTCLQWPAEYIIVFGLAEGKVRLANTKTNKSSTI), 150–191 (GTES…ESQG), 195–233 (NHPCPPYALAWATNSIVAAGCDRKIVAYGKEGHMLQTFD), 238–278 (PQER…WEEA), 284–323 (TNLYTITALAWKRDGSRLCVGTLCGGVEQFDCCLRRSIYK), 483–520 (SHESRVDWLELNETGHKLLFRDRKLRLHLYDIESCSKT), and 521–559 (MILNFCSYMQWVPGSDVLVAQNRNSLCVWYNIEAPERVT). The TPR 1 repeat unit spans residues 593–624 (DEGLIEFGTAIDDGNYIRATAFLETLEMTPET). At Arg672 the chain carries Omega-N-methylarginine. 13 TPR repeats span residues 692 to 725 (EKNYKLAEMIFLEQNAVEEAMGMYQELHRWDECI), 809 to 842 (GELYERAGDLFEKIHNPQKALECYRKGNAFMKAV), 854 to 887 (VKLEEAWGDHLVQQKQLDAAINHYIEARCSIKAI), 912 to 945 (SKYYPLVAQHYASLQEYEIAEELYTKGDRTKDAI), 947 to 970 (MYTQAGRWEQAHKLAMKCMRPEDV), 971 to 1004 (SVLYITQAQEMEKQGKYREAERLYVTVQEPDLAI), 1042 to 1075 (EGRLQEAEYHYLEAQEWKATVNMYRASGLWEEAY), 1142 to 1175 (PEVHLKYAMFLEDEGKFEEAEAEFIRAGKPKEAV), 1276 to 1309 (VEGFVEQARHWEQAGEYSRAVDCYLKVRDSGNSG), 1345 to 1378 (IGKHSAAAELYLNLDLVKEAIDAFIEGEEWNKAK), 1411 to 1445 (GVDVIAALDLYVEQGQWDKCIETATKQNYKILHKY), 1447 to 1477 (ALYATHLIREGSSAQALALYVQHGAPANPQN), and 1574 to 1607 (DKAFYEAGIAAKAVGWDNMAFIFLNRFLDLTDAI).

This sequence belongs to the IFT172 family. Interacts with IFT88. Interacts with IFT57. Interacts with RABL2/RABL2A; binds preferentially to GDP-bound RABL2.

It localises to the cell projection. It is found in the cilium. Functionally, required for the maintenance and formation of cilia. Plays an indirect role in hedgehog (Hh) signaling, cilia being required for all activity of the hedgehog pathway. This Homo sapiens (Human) protein is Intraflagellar transport protein 172 homolog (IFT172).